Reading from the N-terminus, the 1639-residue chain is MAPQPLEQGGAVTSFIPTGQEMAQRQNLIPLGRLIDFIIQRTYHELTVLAELLPRKTDMDRKIEIYNFSASTRQLFIRLLALVKWANSASKVDKSAKIMGFLDKQSMLFIDTADMLSRVARETLVHARLPNFHIPAAVEILTTGSYSRLPSVIRDRIVPPDPITPAEKRQTLQRLNQVIQHRLVTGSLLPQLRKFRIENGRVTFKVDHEFEVSLTVMGDAPTVPWRLLDIDFLVEDKETGDGKALVHPLQVNYIHQLIQGRIVDCTDALAEVYTCLHYFCQSLQLEVLYTQTLRLIRDRLDDHIHVDEYVVGSRLTVSYWRELTNKDPKSELGYRLTIQTDPNDAAKQLAILHVPSIGNKEADIADRAVRSDLLSMERLLVHTVYVRSLARLNDVKTELQLFLKDVEYNIQGTPAMLTVPVLNPCLRAEHIYITVDTHTGMLRCHVPKHLDCPIMPEMQHALNNDWSKLQHLISELRYWITQRRCEKTLQHLPAATQDRLPLIYSHTHPIARMGPHKVFIQLYRHANVILIVELKEKKTCPNEMTYTFYLVLVKPSSVEEGQSPDVLSGQPPQPSAAGGPAPGSDSANAAMPKMYLRVLSMIEFDTFVATHGPGTYIDDPSPTSTSGTSVKRKVSPLDNALSAIGPPLKQQKTIYPAYFIPELAHVVAMCDEKLPFVTLAKEFSMRKIPHGGLQVEANATSLVLKLLTLPQPKPPQAPPTPQQQQQQQQQQQQPGTSDAKSSGAGASANEPKTVHVPPIDKQVWNALLKRLLSVSVRAQVNKSNQTRLWTMELVFYGSPLPSLHHKEQGMRRAVYLQYEMQPVESVSKVVDQLLSDWSKIVYLYTLVHEFREQYNNEKYNLPSMVAIKSYSYTNLLLAYGPNKDVSVNICWDTEAKEFRLVFTGGNSAINAHSMMRDQLQAHLNHNYSLAQVVHMLHETYQPLSSIAKLPIIPHLAILQSPKIPVLSFCIIPQSPTLLRISFQGVYCLEVRFRGGGLCTIRDGAYSRFDRSHVVEEFTPTQGLKGFLSKYVDETAVFRRRSQSEDDNPPSPVTLEDPSAGAGNNGGGGGGGGGAGGGANTFLSGGTGMRGPQSPRDPGLRFAAPLTPPTSSNPHTPASPHPIGGGGGAGGAGGQGGQGGQGGQQQSHMNNFNMTSPPASHMPHPSPGGGLMPSSPLNAQPSPMAAHSPGPSSLSYMQSHTDGSPFAALSPAASNWPGSPGMPRPSPRPGQSPEHKVQTSHHYTSRVLPARSWAGAIPTTLTYEALDTLCRATPHPQKEVPGPELSPLERFLGSVFMRRQLQRIIHQEESLMAITSNEPGVVVFKADCLQYQVFLNPNHMQSLHLKVDQLPMGPMMDGKPPYQWAAQDLQILEQFFDHRVAAPPYRPAVMTSFTRMLNLPAKVLKDFIQIMRLDLMPELVQGNKWNVQFVLRVPPSATPIVPVGTTTILSHRQKILFFIQITRVPYLPNMEWKDAVTMLLPMVYDMNMNHTTLAERREPMPPQLTSAVSAHLRRFSECSVLLPDECSLFPAVHDLLLTLTLPNEPPAPGQMQMQLGGVMQPGGGPGVPGGPGGPMGGQIGGPTPQVVPQVGSSPSPMMHSPMQQMGGGGPQPGAYGGMVGGPGGGPQSGGPVGGGPGGPN.

The LXXLL motif 1 signature appears at 49-53; the sequence is LAELL. Disordered stretches follow at residues 561–586 and 709–755; these read GQSPDVLSGQPPQPSAAGGPAPGSDS and LPQP…KTVH. A compositionally biased stretch (low complexity) spans 575-586; that stretch reads SAAGGPAPGSDS. The segment covering 711–721 has biased composition (pro residues); the sequence is QPKPPQAPPTP. Residues 722–748 show a composition bias toward low complexity; that stretch reads QQQQQQQQQQQQPGTSDAKSSGAGASA. An LXXLL motif 2 motif is present at residues 768 to 772; sequence LKRLL. 2 disordered regions span residues 1039-1243 and 1558-1639; these read RRSQ…HHYT and MQPG…GGPN. 2 stretches are compositionally biased toward gly residues: residues 1062–1088 and 1122–1142; these read GNNGGGGGGGGGAGGGANTFLSGGTGM and IGGGGGAGGAGGQGGQGGQGG. The span at 1189–1201 shows a compositional bias: polar residues; sequence GPSSLSYMQSHTD. A compositionally biased stretch (pro residues) spans 1219 to 1229; sequence PGMPRPSPRPG. Positions 1558–1579 are enriched in gly residues; that stretch reads MQPGGGPGVPGGPGGPMGGQIG. Residues 1589 to 1603 show a composition bias toward low complexity; sequence VGSSPSPMMHSPMQQ. Residues 1604 to 1639 are compositionally biased toward gly residues; it reads MGGGGPQPGAYGGMVGGPGGGPQSGGPVGGGPGGPN.

The protein belongs to the Mediator complex subunit 14 family. In terms of assembly, component of the Mediator complex.

It localises to the nucleus. Its function is as follows. Component of the Mediator complex, a coactivator involved in the regulated transcription of nearly all RNA polymerase II-dependent genes. Mediator functions as a bridge to convey information from gene-specific regulatory proteins to the basal RNA polymerase II transcription machinery. Mediator is recruited to promoters by direct interactions with regulatory proteins and serves as a scaffold for the assembly of a functional preinitiation complex with RNA polymerase II and the general transcription factors. This chain is Mediator of RNA polymerase II transcription subunit 14 (MED14), found in Anopheles gambiae (African malaria mosquito).